Reading from the N-terminus, the 226-residue chain is ATP synthase F(0) complex subunit a (226 aa).

6 helical membrane passes run 5 to 25, 68 to 88, 97 to 117, 136 to 156, 179 to 199, and 201 to 221; these read LFAPFMIPVMLGIPITTLIII, WSLMLISLFLFIASTNLLGML, QLSMNVGMAIPLWAGTVATGF, FLIPMLVIIETISLFIQPVAL, LVLMSTSLFTAIITFTILALL, and ILEFRVALIQAYVFTLLVSLY.

The protein belongs to the ATPase A chain family. Component of the ATP synthase complex composed at least of ATP5F1A/subunit alpha, ATP5F1B/subunit beta, ATP5MC1/subunit c (homooctomer), MT-ATP6/subunit a, MT-ATP8/subunit 8, ATP5ME/subunit e, ATP5MF/subunit f, ATP5MG/subunit g, ATP5MK/subunit k, ATP5MJ/subunit j, ATP5F1C/subunit gamma, ATP5F1D/subunit delta, ATP5F1E/subunit epsilon, ATP5PF/subunit F6, ATP5PB/subunit b, ATP5PD/subunit d, ATP5PO/subunit OSCP. ATP synthase complex consists of a soluble F(1) head domain (subunits alpha(3) and beta(3)) - the catalytic core - and a membrane F(0) domain - the membrane proton channel (subunits c, a, 8, e, f, g, k and j). These two domains are linked by a central stalk (subunits gamma, delta, and epsilon) rotating inside the F1 region and a stationary peripheral stalk (subunits F6, b, d, and OSCP). Interacts with DNAJC30; interaction is direct.

Its subcellular location is the mitochondrion inner membrane. It carries out the reaction H(+)(in) = H(+)(out). In terms of biological role, subunit a, of the mitochondrial membrane ATP synthase complex (F(1)F(0) ATP synthase or Complex V) that produces ATP from ADP in the presence of a proton gradient across the membrane which is generated by electron transport complexes of the respiratory chain. ATP synthase complex consist of a soluble F(1) head domain - the catalytic core - and a membrane F(1) domain - the membrane proton channel. These two domains are linked by a central stalk rotating inside the F(1) region and a stationary peripheral stalk. During catalysis, ATP synthesis in the catalytic domain of F(1) is coupled via a rotary mechanism of the central stalk subunits to proton translocation. With the subunit c (ATP5MC1), forms the proton-conducting channel in the F(0) domain, that contains two crucial half-channels (inlet and outlet) that facilitate proton movement from the mitochondrial intermembrane space (IMS) into the matrix. Protons are taken up via the inlet half-channel and released through the outlet half-channel, following a Grotthuss mechanism. The protein is ATP synthase F(0) complex subunit a of Balaenoptera musculus (Blue whale).